Consider the following 488-residue polypeptide: GTPase Der (488 aa).

EngA-type G domains follow at residues 3 to 166 and 200 to 373; these read PVVA…AEAM and IKLA…DSAT. GTP is bound by residues 9–16, 56–60, 118–121, 206–213, 253–257, and 318–321; these read GRPNVGKS, DTGGI, NKVD, GKPNVGKS, DTAGV, and NKWD. A KH-like domain is found at 374-458; it reads RRVSTSMLTR…PIQLRFHEGD (85 aa).

It belongs to the TRAFAC class TrmE-Era-EngA-EngB-Septin-like GTPase superfamily. EngA (Der) GTPase family. In terms of assembly, associates with the 50S ribosomal subunit.

GTPase that plays an essential role in the late steps of ribosome biogenesis. This Shewanella amazonensis (strain ATCC BAA-1098 / SB2B) protein is GTPase Der.